We begin with the raw amino-acid sequence, 177 residues long: TRAF-interacting protein with FHA domain-containing protein A (177 aa).

The region spanning 48 to 104 (VAFGRDYNVCRYPLLSNRVSRIQFNLQFFKHFNCSTTAIEIKNLSKKNKLYVDNLEL) is the FHA domain.

Belongs to the TIFA family. Interacts with traf6.

The protein localises to the cytoplasm. Adapter molecule that plays a key role in the activation of pro-inflammatory NF-kappa-B signaling following detection of bacterial pathogen-associated molecular pattern metabolites (PAMPs). Promotes activation of an innate immune response by inducing the oligomerization and polyubiquitination of TRAF6, which leads to the activation of TAK1 and IKK through a proteasome-independent mechanism. The chain is TRAF-interacting protein with FHA domain-containing protein A from Xenopus tropicalis (Western clawed frog).